The sequence spans 390 residues: Purine permease 21 (390 aa).

The segment at 12–34 is disordered; the sequence is QQGKEPIPTDQDERSSVSGSQTK. Transmembrane regions (helical) follow at residues 44–64, 78–98, 118–138, 140–160, 169–189, 204–224, 241–261, 287–307, 312–332, and 336–356; these read WLRV…ATIL, LATV…LLSV, LVYI…SIGL, YLPV…TAFF, LTPI…LLAF, YVKG…LLSL, VINM…VGLF, LVWT…LIFE, FSNA…VIIF, and MNGL…SYVY. The segment at 367–390 is disordered; sequence KSNEIPTTESPDRPEAEGSSEQSK.

This sequence belongs to the purine permeases (TC 2.A.7.14) family. Expressed in mesophyll cells.

It localises to the membrane. This chain is Purine permease 21, found in Arabidopsis thaliana (Mouse-ear cress).